The chain runs to 245 residues: Ribosomal RNA large subunit methyltransferase E (245 aa).

Residues 1-26 (MTKPPVGSNRSGRKLGQKVKKGKLKA) form a disordered region. Positions 11 to 26 (SGRKLGQKVKKGKLKA) are enriched in basic residues. S-adenosyl-L-methionine is bound by residues glycine 81, tryptophan 83, aspartate 104, aspartate 120, and aspartate 144. Lysine 184 (proton acceptor) is an active-site residue.

Belongs to the class I-like SAM-binding methyltransferase superfamily. RNA methyltransferase RlmE family.

The protein resides in the cytoplasm. The catalysed reaction is uridine(2552) in 23S rRNA + S-adenosyl-L-methionine = 2'-O-methyluridine(2552) in 23S rRNA + S-adenosyl-L-homocysteine + H(+). Specifically methylates the uridine in position 2552 of 23S rRNA at the 2'-O position of the ribose in the fully assembled 50S ribosomal subunit. This chain is Ribosomal RNA large subunit methyltransferase E, found in Sinorhizobium medicae (strain WSM419) (Ensifer medicae).